Consider the following 430-residue polypeptide: Ribosomal protein uS12 methylthiotransferase RimO (430 aa).

One can recognise an MTTase N-terminal domain in the interval 1–116 (MRVGIKVLGC…IANAIENGTD (116 aa)). [4Fe-4S] cluster contacts are provided by cysteine 10, cysteine 46, cysteine 79, cysteine 148, cysteine 152, and cysteine 155. The region spanning 134 to 365 (LEERPYAYVK…LLQAEISNSR (232 aa)) is the Radical SAM core domain. One can recognise a TRAM domain in the interval 367–430 (DRFVGKKLKF…DEYDMWGSVI (64 aa)).

This sequence belongs to the methylthiotransferase family. RimO subfamily. Monomer. The cofactor is [4Fe-4S] cluster.

The protein resides in the cytoplasm. It carries out the reaction L-aspartate(89)-[ribosomal protein uS12]-hydrogen + (sulfur carrier)-SH + AH2 + 2 S-adenosyl-L-methionine = 3-methylsulfanyl-L-aspartate(89)-[ribosomal protein uS12]-hydrogen + (sulfur carrier)-H + 5'-deoxyadenosine + L-methionine + A + S-adenosyl-L-homocysteine + 2 H(+). Its function is as follows. Catalyzes the methylthiolation of an aspartic acid residue of ribosomal protein uS12. This is Ribosomal protein uS12 methylthiotransferase RimO from Thermotoga maritima (strain ATCC 43589 / DSM 3109 / JCM 10099 / NBRC 100826 / MSB8).